A 356-amino-acid polypeptide reads, in one-letter code: Dual-specificity RNA methyltransferase RlmN (356 aa).

Catalysis depends on glutamate 89, which acts as the Proton acceptor. Positions 108-341 (SHARYTICVS…CTIRESKGLD (234 aa)) constitute a Radical SAM core domain. A disulfide bond links cysteine 115 and cysteine 346. 3 residues coordinate [4Fe-4S] cluster: cysteine 122, cysteine 126, and cysteine 129. Residues 172 to 173 (GE), serine 204, 227 to 229 (SLH), and asparagine 303 each bind S-adenosyl-L-methionine. Cysteine 346 serves as the catalytic S-methylcysteine intermediate.

Belongs to the radical SAM superfamily. RlmN family. Requires [4Fe-4S] cluster as cofactor.

The protein localises to the cytoplasm. It catalyses the reaction adenosine(2503) in 23S rRNA + 2 reduced [2Fe-2S]-[ferredoxin] + 2 S-adenosyl-L-methionine = 2-methyladenosine(2503) in 23S rRNA + 5'-deoxyadenosine + L-methionine + 2 oxidized [2Fe-2S]-[ferredoxin] + S-adenosyl-L-homocysteine. It carries out the reaction adenosine(37) in tRNA + 2 reduced [2Fe-2S]-[ferredoxin] + 2 S-adenosyl-L-methionine = 2-methyladenosine(37) in tRNA + 5'-deoxyadenosine + L-methionine + 2 oxidized [2Fe-2S]-[ferredoxin] + S-adenosyl-L-homocysteine. In terms of biological role, specifically methylates position 2 of adenine 2503 in 23S rRNA and position 2 of adenine 37 in tRNAs. m2A2503 modification seems to play a crucial role in the proofreading step occurring at the peptidyl transferase center and thus would serve to optimize ribosomal fidelity. This is Dual-specificity RNA methyltransferase RlmN from Campylobacter jejuni subsp. jejuni serotype O:2 (strain ATCC 700819 / NCTC 11168).